Here is a 60-residue protein sequence, read N- to C-terminus: Toxin FS-2 (60 aa).

4 cysteine pairs are disulfide-bonded: Cys-3–Cys-22, Cys-17–Cys-39, Cys-41–Cys-52, and Cys-53–Cys-58. The segment at 41–48 is important for binding to L-type calcium channels; it reads CPTAMWPY.

It belongs to the three-finger toxin family. Short-chain subfamily. L-type calcium blocker sub-subfamily. In terms of tissue distribution, expressed by the venom gland.

Its subcellular location is the secreted. Its function is as follows. Specific blocker of the voltage-dependent L-type calcium channel (Cav1/CACNA1). Inhibits cardiac contractions. The polypeptide is Toxin FS-2 (Dendroaspis polylepis polylepis (Black mamba)).